Reading from the N-terminus, the 134-residue chain is Small ribosomal subunit protein uS11 (134 aa).

This sequence belongs to the universal ribosomal protein uS11 family. In terms of assembly, part of the 30S ribosomal subunit. Interacts with proteins S7 and S18. Binds to IF-3.

Its function is as follows. Located on the platform of the 30S subunit, it bridges several disparate RNA helices of the 16S rRNA. Forms part of the Shine-Dalgarno cleft in the 70S ribosome. This is Small ribosomal subunit protein uS11 from Corynebacterium diphtheriae (strain ATCC 700971 / NCTC 13129 / Biotype gravis).